The primary structure comprises 32 residues: SLGGFLKGVGKALAGVGKVVADQFGNLLQAGQ.

The residue at position 32 (Gln32) is a Glutamine amide.

In terms of tissue distribution, expressed by the skin glands.

Its subcellular location is the secreted. Antimicrobial peptide. The polypeptide is Dermatoxin-J1 (Phasmahyla jandaia (Jandaia leaf frog)).